Consider the following 437-residue polypeptide: MDPDAGVIFARTAAGAAVALGLLKCGRIWLCPVCSGQDPARPSEEITEAVVSWLQQGGWAYLVTFTARHTAADRLSDLMDALQGTRADAETGTKRRPGAYQRLITGAAWAGDKRRKSNQEGIRGRIGYIGMIRATEVTVGEGAGWHPHIHAIVLVGGRTEGQRGDKRITGTFTPSEDALTEWEDRWRRSGPATLARSTPGFRPPTGARSPGATAGARATASTSSSSVRSGRQRPGRVHRQDAGRQEPGPGAGTRRPQGRPPGQHDVLRTPSRIGDLMGGVPEEEAAGHGSLAWGLDRWAEYETAVSGAGHRVDPLPAPAPGPDRRRHRGRRHGRPVPDRRRRRFRDGVQIWDRAWKGLVGRSLDLAVVEAVEGREISMDALGELVQSAGQSRAFLRVLTPQEVTELYDELLRTLARRREQAAERRAAEAAEAEPTTR.

Disordered regions lie at residues 161–285 and 305–338; these read GQRG…EEEA and VSGAGHRVDPLPAPAPGPDRRRHRGRRHGRPVPD. Low complexity predominate over residues 203-229; sequence PPTGARSPGATAGARATASTSSSSVRS. Over residues 324–338 the composition is skewed to basic residues; that stretch reads RRRHRGRRHGRPVPD.

This sequence belongs to the Gram-positive plasmids replication protein type 1 family.

In Streptomyces cyanogenus, this protein is Neomycin resistance protein.